Consider the following 372-residue polypeptide: D-alanine--D-alanine ligase (372 aa).

An ATP-grasp domain is found at 145–349 (KTVLRAGGIP…CPNLLDQLIE (205 aa)). Residue 176–231 (DRWGTSELFVKAVSLGSSVATLPVKTETEFTKAVKEVFRYDDRLMVEPRIRGREIE) coordinates ATP. Mg(2+)-binding residues include D303, E316, and N318.

The protein belongs to the D-alanine--D-alanine ligase family. It depends on Mg(2+) as a cofactor. Requires Mn(2+) as cofactor.

It localises to the cytoplasm. The catalysed reaction is 2 D-alanine + ATP = D-alanyl-D-alanine + ADP + phosphate + H(+). It functions in the pathway cell wall biogenesis; peptidoglycan biosynthesis. Functionally, cell wall formation. In Coxiella burnetii (strain CbuK_Q154) (Coxiella burnetii (strain Q154)), this protein is D-alanine--D-alanine ligase.